A 446-amino-acid chain; its full sequence is Methylenetetrahydrofolate--tRNA-(uracil-5-)-methyltransferase TrmFO (446 aa).

An FAD-binding site is contributed by 8–13; it reads GAGLAG.

The protein belongs to the MnmG family. TrmFO subfamily. Requires FAD as cofactor.

It is found in the cytoplasm. The catalysed reaction is uridine(54) in tRNA + (6R)-5,10-methylene-5,6,7,8-tetrahydrofolate + NADH + H(+) = 5-methyluridine(54) in tRNA + (6S)-5,6,7,8-tetrahydrofolate + NAD(+). It catalyses the reaction uridine(54) in tRNA + (6R)-5,10-methylene-5,6,7,8-tetrahydrofolate + NADPH + H(+) = 5-methyluridine(54) in tRNA + (6S)-5,6,7,8-tetrahydrofolate + NADP(+). Functionally, catalyzes the folate-dependent formation of 5-methyl-uridine at position 54 (M-5-U54) in all tRNAs. The chain is Methylenetetrahydrofolate--tRNA-(uracil-5-)-methyltransferase TrmFO from Paracoccus denitrificans (strain Pd 1222).